The primary structure comprises 135 residues: DNA-binding protein H-NS homolog (135 aa).

Residues 112-117 (QGRTPS) mediate DNA binding.

It belongs to the histone-like protein H-NS family. As to quaternary structure, homodimer that oligomerizes on DNA into higher-order complexes that form bridges between disparate regions of DNA compacting it.

The protein resides in the cytoplasm. The protein localises to the nucleoid. A DNA-binding protein implicated in transcriptional repression and chromosome organization and compaction. Binds nucleation sites in AT-rich DNA and bridges them, forming higher-order nucleoprotein complexes and condensing the chromosome. A subset of genes are repressed by H-NS in association with other proteins. The chain is DNA-binding protein H-NS homolog (hns) from Buchnera aphidicola subsp. Acyrthosiphon pisum (strain APS) (Acyrthosiphon pisum symbiotic bacterium).